A 530-amino-acid polypeptide reads, in one-letter code: Tryptophan 7-halogenase RebH (530 aa).

FAD contacts are provided by Gly13, Thr15, Ala16, Ala39, Asp41, Glu49, and Ala50. Lys79 is a catalytic residue. The FAD site is built by Val197 and Thr348. Glu357 provides a ligand contact to L-tryptophan. Residues Thr359 and Gly360 each coordinate chloride. Ile361 contacts FAD. 4 residues coordinate L-tryptophan: Tyr454, Tyr455, Glu461, and Phe465.

Belongs to the flavin-dependent halogenase family. Bacterial tryptophan halogenase subfamily. As to quaternary structure, homodimer.

It carries out the reaction L-tryptophan + FADH2 + chloride + O2 = 7-chloro-L-tryptophan + FAD + 2 H2O. In terms of biological role, involved in the biosynthesis of the indolocarbazole antitumor agent rebeccamycin. Catalyzes the chlorination of tryptophan (Trp) at C7 position to yield 7-chlorotryptophan. It is also able to use bromide ions to generate monobrominated Trp. The polypeptide is Tryptophan 7-halogenase RebH (rebH) (Lentzea aerocolonigenes (Lechevalieria aerocolonigenes)).